Here is a 348-residue protein sequence, read N- to C-terminus: Fructose-1,6-bisphosphatase class 1 (348 aa).

Mg(2+)-binding residues include glutamate 92, aspartate 111, leucine 113, and aspartate 114. Residues 114–117 and asparagine 204 each bind substrate; that span reads DGSS. Glutamate 276 contacts Mg(2+).

This sequence belongs to the FBPase class 1 family. As to quaternary structure, homotetramer. The cofactor is Mg(2+).

The protein resides in the cytoplasm. It carries out the reaction beta-D-fructose 1,6-bisphosphate + H2O = beta-D-fructose 6-phosphate + phosphate. The protein operates within carbohydrate biosynthesis; gluconeogenesis. The chain is Fructose-1,6-bisphosphatase class 1 from Methylorubrum extorquens (strain CM4 / NCIMB 13688) (Methylobacterium extorquens).